The following is a 329-amino-acid chain: Sulfate-binding protein (329 aa).

Residues 1–19 form the signal peptide; sequence MNKWGVGLTFLLAATSVMA.

It belongs to the prokaryotic sulfate-binding protein family.

The protein resides in the periplasm. Its function is as follows. This protein specifically binds sulfate and is involved in its transmembrane transport. The polypeptide is Sulfate-binding protein (sbp) (Escherichia coli (strain K12)).